Consider the following 229-residue polypeptide: Cytidylate kinase (229 aa).

10-18 (GYSSCGKST) contributes to the ATP binding site.

This sequence belongs to the cytidylate kinase family. Type 1 subfamily.

The protein localises to the cytoplasm. The enzyme catalyses CMP + ATP = CDP + ADP. The catalysed reaction is dCMP + ATP = dCDP + ADP. The chain is Cytidylate kinase from Phocaeicola vulgatus (strain ATCC 8482 / DSM 1447 / JCM 5826 / CCUG 4940 / NBRC 14291 / NCTC 11154) (Bacteroides vulgatus).